Here is a 180-residue protein sequence, read N- to C-terminus: Protein PHLOEM PROTEIN 2-LIKE A9 (180 aa).

The disordered stretch occupies residues methionine 1–arginine 21. The segment covering histidine 9–arginine 21 has biased composition (basic and acidic residues).

This is Protein PHLOEM PROTEIN 2-LIKE A9 (PP2A9) from Arabidopsis thaliana (Mouse-ear cress).